A 319-amino-acid polypeptide reads, in one-letter code: Transaldolase (319 aa).

The Schiff-base intermediate with substrate role is filled by lysine 125.

It belongs to the transaldolase family. Type 1 subfamily. Homodimer.

The protein localises to the cytoplasm. The catalysed reaction is D-sedoheptulose 7-phosphate + D-glyceraldehyde 3-phosphate = D-erythrose 4-phosphate + beta-D-fructose 6-phosphate. Its pathway is carbohydrate degradation; pentose phosphate pathway; D-glyceraldehyde 3-phosphate and beta-D-fructose 6-phosphate from D-ribose 5-phosphate and D-xylulose 5-phosphate (non-oxidative stage): step 2/3. In terms of biological role, transaldolase is important for the balance of metabolites in the pentose-phosphate pathway. In Ralstonia nicotianae (strain ATCC BAA-1114 / GMI1000) (Ralstonia solanacearum), this protein is Transaldolase.